The chain runs to 274 residues: 2,3,4,5-tetrahydropyridine-2,6-dicarboxylate N-succinyltransferase (274 aa).

It belongs to the transferase hexapeptide repeat family.

The protein resides in the cytoplasm. The enzyme catalyses (S)-2,3,4,5-tetrahydrodipicolinate + succinyl-CoA + H2O = (S)-2-succinylamino-6-oxoheptanedioate + CoA. It functions in the pathway amino-acid biosynthesis; L-lysine biosynthesis via DAP pathway; LL-2,6-diaminopimelate from (S)-tetrahydrodipicolinate (succinylase route): step 1/3. The polypeptide is 2,3,4,5-tetrahydropyridine-2,6-dicarboxylate N-succinyltransferase (Erwinia tasmaniensis (strain DSM 17950 / CFBP 7177 / CIP 109463 / NCPPB 4357 / Et1/99)).